Here is a 242-residue protein sequence, read N- to C-terminus: ATP synthase subunit a (242 aa).

5 consecutive transmembrane segments (helical) span residues 21 to 41 (LSSI…AIIC), 83 to 103 (AVTL…FSIV), 117 to 137 (DATV…FYGI), 175 to 195 (LYGN…LFFN), and 198 to 218 (AWGW…SIFV).

It belongs to the ATPase A chain family. In terms of assembly, F-type ATPases have 2 components, CF(1) - the catalytic core - and CF(0) - the membrane proton channel. CF(1) has five subunits: alpha(3), beta(3), gamma(1), delta(1), epsilon(1). CF(0) has three main subunits: a(1), b(2) and c(9-12). The alpha and beta chains form an alternating ring which encloses part of the gamma chain. CF(1) is attached to CF(0) by a central stalk formed by the gamma and epsilon chains, while a peripheral stalk is formed by the delta and b chains.

Its subcellular location is the cell membrane. Its function is as follows. Key component of the proton channel; it plays a direct role in the translocation of protons across the membrane. In Staphylococcus aureus (strain Newman), this protein is ATP synthase subunit a.